The chain runs to 221 residues: Imidazoleglycerol-phosphate dehydratase (221 aa).

The protein belongs to the imidazoleglycerol-phosphate dehydratase family.

It catalyses the reaction D-erythro-1-(imidazol-4-yl)glycerol 3-phosphate = 3-(imidazol-4-yl)-2-oxopropyl phosphate + H2O. Its pathway is amino-acid biosynthesis; L-histidine biosynthesis; L-histidine from 5-phospho-alpha-D-ribose 1-diphosphate: step 6/9. The polypeptide is Imidazoleglycerol-phosphate dehydratase (HIS3) (Kluyveromyces lactis (strain ATCC 8585 / CBS 2359 / DSM 70799 / NBRC 1267 / NRRL Y-1140 / WM37) (Yeast)).